Consider the following 231-residue polypeptide: Trypsin (231 aa).

Positions 1 to 8 (FPTDDDDK) are cleaved as a propeptide — activation peptide. Positions 9–229 (IVGGYTCAAN…YVNWIQQTIA (221 aa)) constitute a Peptidase S1 domain. Disulfide bonds link C15–C145, C33–C49, C117–C218, C124–C191, C156–C170, and C181–C205. H48 functions as the Charge relay system in the catalytic mechanism. Positions 60, 62, 65, and 70 each coordinate Ca(2+). D92 functions as the Charge relay system in the catalytic mechanism. The active-site Charge relay system is the S185.

The protein belongs to the peptidase S1 family. It depends on Ca(2+) as a cofactor.

It is found in the secreted. It localises to the extracellular space. It catalyses the reaction Preferential cleavage: Arg-|-Xaa, Lys-|-Xaa.. The polypeptide is Trypsin (Sus scrofa (Pig)).